The following is a 155-amino-acid chain: NADPH-dependent 7-cyano-7-deazaguanine reductase (155 aa).

Cys-53 serves as the catalytic Thioimide intermediate. Catalysis depends on Asp-60, which acts as the Proton donor. Substrate contacts are provided by residues 75-77 and 94-95; these read VES and HE.

This sequence belongs to the GTP cyclohydrolase I family. QueF type 1 subfamily.

The protein resides in the cytoplasm. It catalyses the reaction 7-aminomethyl-7-carbaguanine + 2 NADP(+) = 7-cyano-7-deazaguanine + 2 NADPH + 3 H(+). It participates in tRNA modification; tRNA-queuosine biosynthesis. Functionally, catalyzes the NADPH-dependent reduction of 7-cyano-7-deazaguanine (preQ0) to 7-aminomethyl-7-deazaguanine (preQ1). The polypeptide is NADPH-dependent 7-cyano-7-deazaguanine reductase (Brucella suis (strain ATCC 23445 / NCTC 10510)).